Consider the following 89-residue polypeptide: Small ribosomal subunit protein uS15 (89 aa).

It belongs to the universal ribosomal protein uS15 family. As to quaternary structure, part of the 30S ribosomal subunit. Forms a bridge to the 50S subunit in the 70S ribosome, contacting the 23S rRNA.

One of the primary rRNA binding proteins, it binds directly to 16S rRNA where it helps nucleate assembly of the platform of the 30S subunit by binding and bridging several RNA helices of the 16S rRNA. Its function is as follows. Forms an intersubunit bridge (bridge B4) with the 23S rRNA of the 50S subunit in the ribosome. This Mesorhizobium japonicum (strain LMG 29417 / CECT 9101 / MAFF 303099) (Mesorhizobium loti (strain MAFF 303099)) protein is Small ribosomal subunit protein uS15.